The primary structure comprises 95 residues: RING finger protein Z (95 aa).

G2 carries N-myristoyl glycine; by host lipidation. The segment at 38–74 (CKRCWFATKGLIACSDHYLCLNCLTIMLSDGNFCEVC) adopts an RING-type; atypical zinc-finger fold. The short motif at 88 to 91 (PSAP) is the PTAP/PSAP motif element.

This sequence belongs to the arenaviridae Z protein family. Interacts with protein NP; this interaction probably directs the encapsidated genome to budding sites. Interacts (via RING domain) with polymerase L; this interaction inhibits viral transcription and replication, Z partially blocks the product exit tunnel for the releasing nascent RNA product. Interacts with the glycoprotein complex; this interaction plays a role in virion budding. Interacts with host eIF4E; this interaction results in eIF4E reduced affinity for its substrate, the 5'-m7 G cap structure. Interacts (via late-budding domain) with host TSG101; this interaction is essential for budding and release of viral particles. Interacts with host RPLP0; this interaction may serve to load ribosome-like particles inside the virion. Interacts with host PML; this interaction induces PML bodies redistribution in the cytoplasm upon viral infection. Myristoylation is required for the role of RING finger protein Z in assembly and budding.

It is found in the virion. The protein localises to the host cytoplasm. It localises to the host perinuclear region. The protein resides in the host cell membrane. Its function is as follows. Plays a crucial role in virion assembly and budding. Expressed late in the virus life cycle, it acts as an inhibitor of viral transcription and RNA synthesis by interacting with the viral polymerase L. Presumably recruits the NP encapsidated genome to cellular membranes at budding sites via direct interaction with NP. Plays critical roles in the final steps of viral release by interacting with host TSG101, a member of the vacuolar protein-sorting pathway and using other cellular host proteins involved in vesicle formation pathway. The budding of the virus progeny occurs after association of protein Z with the viral glycoprotein complex SSP-GP1-GP2 at the cell periphery, step that requires myristoylation of protein Z. Also selectively represses protein production by associating with host eIF4E. In cell-based minigenome assay, has an inhibitory effect on the ribonucleoprotein machinery (vRNP), which is responsible for the replication and transcription of the viral genome. In Sooretamys angouya (Paraguayan rice rat), this protein is RING finger protein Z.